Reading from the N-terminus, the 245-residue chain is 2,3-bisphosphoglycerate-dependent phosphoglycerate mutase (245 aa).

Residues 8-15, 21-22, arginine 60, 87-90, lysine 98, 114-115, and 183-184 contribute to the substrate site; these read RHGQSLWN, TG, ERHY, RR, and GN. The Tele-phosphohistidine intermediate role is filled by histidine 9. The active-site Proton donor/acceptor is glutamate 87.

It belongs to the phosphoglycerate mutase family. BPG-dependent PGAM subfamily.

The catalysed reaction is (2R)-2-phosphoglycerate = (2R)-3-phosphoglycerate. The protein operates within carbohydrate degradation; glycolysis; pyruvate from D-glyceraldehyde 3-phosphate: step 3/5. Functionally, catalyzes the interconversion of 2-phosphoglycerate and 3-phosphoglycerate. This is 2,3-bisphosphoglycerate-dependent phosphoglycerate mutase from Bacillus cereus (strain ATCC 14579 / DSM 31 / CCUG 7414 / JCM 2152 / NBRC 15305 / NCIMB 9373 / NCTC 2599 / NRRL B-3711).